The primary structure comprises 189 residues: Riboflavin kinase (189 aa).

Mg(2+) is bound by residues T42 and N44. The Nucleophile role is filled by E124.

The protein belongs to the flavokinase family. Requires Zn(2+) as cofactor. Mg(2+) is required as a cofactor.

The catalysed reaction is riboflavin + ATP = FMN + ADP + H(+). It functions in the pathway cofactor biosynthesis; FMN biosynthesis; FMN from riboflavin (ATP route): step 1/1. In terms of biological role, catalyzes the phosphorylation of riboflavin (vitamin B2) to form flavin mononucleotide (FMN) coenzyme. This Candida glabrata (strain ATCC 2001 / BCRC 20586 / JCM 3761 / NBRC 0622 / NRRL Y-65 / CBS 138) (Yeast) protein is Riboflavin kinase (FMN1).